A 159-amino-acid chain; its full sequence is Cytochrome c-type biogenesis protein CcmE (159 aa).

The Cytoplasmic segment spans residues Met1–Arg8. A helical; Signal-anchor for type II membrane protein membrane pass occupies residues Leu9 to Ala29. The Periplasmic portion of the chain corresponds to Leu30–Ser159. A disordered region spans residues Lys129 to Ser159. His130 and Tyr134 together coordinate heme.

Belongs to the CcmE/CycJ family.

It localises to the cell inner membrane. In terms of biological role, heme chaperone required for the biogenesis of c-type cytochromes. Transiently binds heme delivered by CcmC and transfers the heme to apo-cytochromes in a process facilitated by CcmF and CcmH. This is Cytochrome c-type biogenesis protein CcmE from Salmonella typhimurium (strain LT2 / SGSC1412 / ATCC 700720).